We begin with the raw amino-acid sequence, 693 residues long: Elongation factor G (693 aa).

The 275-residue stretch at 8 to 282 folds into the tr-type G domain; sequence EKTRNIGIMA…AVIDYLPSPL (275 aa). Residues 17 to 24, 81 to 85, and 135 to 138 each bind GTP; these read AHIDAGKT, DTPGH, and NKMD.

This sequence belongs to the TRAFAC class translation factor GTPase superfamily. Classic translation factor GTPase family. EF-G/EF-2 subfamily.

It is found in the cytoplasm. In terms of biological role, catalyzes the GTP-dependent ribosomal translocation step during translation elongation. During this step, the ribosome changes from the pre-translocational (PRE) to the post-translocational (POST) state as the newly formed A-site-bound peptidyl-tRNA and P-site-bound deacylated tRNA move to the P and E sites, respectively. Catalyzes the coordinated movement of the two tRNA molecules, the mRNA and conformational changes in the ribosome. The protein is Elongation factor G of Staphylococcus carnosus (strain TM300).